A 474-amino-acid polypeptide reads, in one-letter code: Glutamate--tRNA ligase 1 (474 aa).

Positions 10–20 (PSPTGFLHIGG) match the 'HIGH' region motif. Residues 239–243 (KLSKR) carry the 'KMSKS' region motif. Residue Lys242 coordinates ATP.

The protein belongs to the class-I aminoacyl-tRNA synthetase family. Glutamate--tRNA ligase type 1 subfamily. As to quaternary structure, monomer.

Its subcellular location is the cytoplasm. It catalyses the reaction tRNA(Glu) + L-glutamate + ATP = L-glutamyl-tRNA(Glu) + AMP + diphosphate. In terms of biological role, catalyzes the attachment of glutamate to tRNA(Glu) in a two-step reaction: glutamate is first activated by ATP to form Glu-AMP and then transferred to the acceptor end of tRNA(Glu). The chain is Glutamate--tRNA ligase 1 from Methylobacterium sp. (strain 4-46).